The chain runs to 96 residues: UPF0235 protein PC1_3453 (96 aa).

This sequence belongs to the UPF0235 family.

In Pectobacterium carotovorum subsp. carotovorum (strain PC1), this protein is UPF0235 protein PC1_3453.